We begin with the raw amino-acid sequence, 399 residues long: Phosphatidate cytidylyltransferase 5, chloroplastic (399 aa).

A chloroplast-targeting transit peptide spans methionine 1–arginine 26. The next 6 membrane-spanning stretches (helical) occupy residues valine 123–leucine 143, phenylalanine 187–leucine 207, leucine 217–leucine 237, valine 266–phenylalanine 286, alanine 309–tryptophan 329, and leucine 333–threonine 353.

It belongs to the CDS family. It depends on Mg(2+) as a cofactor.

It is found in the plastid. Its subcellular location is the chloroplast membrane. The catalysed reaction is a 1,2-diacyl-sn-glycero-3-phosphate + CTP + H(+) = a CDP-1,2-diacyl-sn-glycerol + diphosphate. The protein operates within phospholipid metabolism; CDP-diacylglycerol biosynthesis; CDP-diacylglycerol from sn-glycerol 3-phosphate: step 3/3. Its activity is regulated as follows. Highest activities is obtained at about 30 mM CTP and 2 mM phosphatidic acid (PA). May be involved in the synthesis of minor phospholipids and in modulation of IP3-mediated signal transduction. Promotes the biosynthesis of plastidial phosphatidylglycerol (PG) which is required for structure and function of thylakoid membranes and, hence, for photoautotrophic growth. The chain is Phosphatidate cytidylyltransferase 5, chloroplastic from Arabidopsis thaliana (Mouse-ear cress).